The sequence spans 146 residues: Large ribosomal subunit protein uL11 (146 aa).

It belongs to the universal ribosomal protein uL11 family. Part of the ribosomal stalk of the 50S ribosomal subunit. Interacts with L10 and the large rRNA to form the base of the stalk. L10 forms an elongated spine to which L12 dimers bind in a sequential fashion forming a multimeric L10(L12)X complex. Post-translationally, one or more lysine residues are methylated.

Its function is as follows. Forms part of the ribosomal stalk which helps the ribosome interact with GTP-bound translation factors. This Corynebacterium jeikeium (strain K411) protein is Large ribosomal subunit protein uL11.